The chain runs to 283 residues: Cyclin-C (283 aa).

Residues 46-144 (NVIQALGEHL…ILECEFYLLE (99 aa)) form the Cyclin N-terminal domain. Positions 252–283 (TILNKMPKPKPPPNSEGEQGTNGSQSSGYSQS) are disordered. Over residues 267–283 (EGEQGTNGSQSSGYSQS) the composition is skewed to polar residues.

This sequence belongs to the cyclin family. Cyclin C subfamily. In terms of assembly, component of the Mediator complex. The cylin/CDK pair formed by ccnc/cdk8 also associates with the large subunit of RNA polymerase II.

It is found in the nucleus. Its function is as follows. Component of the Mediator complex, a coactivator involved in regulated gene transcription of nearly all RNA polymerase II-dependent genes. Mediator functions as a bridge to convey information from gene-specific regulatory proteins to the basal RNA polymerase II transcription machinery. Mediator is recruited to promoters by direct interactions with regulatory proteins and serves as a scaffold for the assembly of a functional preinitiation complex with RNA polymerase II and the general transcription factors. Binds to and activates cyclin-dependent kinase cdk8 that phosphorylates the CTD (C-terminal domain) of the large subunit of RNA polymerase II (RNAp II), which may inhibit the formation of a transcription initiation complex. This is Cyclin-C (ccnc) from Xenopus tropicalis (Western clawed frog).